The following is a 323-amino-acid chain: Malate dehydrogenase (323 aa).

Residue 11–17 (GAAGQIA) participates in NAD(+) binding. Substrate is bound by residues Arg-92 and Arg-98. Residues Asn-105, Gln-112, and 129–131 (VGN) contribute to the NAD(+) site. Substrate-binding residues include Asn-131 and Arg-162. His-187 functions as the Proton acceptor in the catalytic mechanism.

This sequence belongs to the LDH/MDH superfamily. MDH type 2 family.

The catalysed reaction is (S)-malate + NAD(+) = oxaloacetate + NADH + H(+). Functionally, catalyzes the reversible oxidation of malate to oxaloacetate. The sequence is that of Malate dehydrogenase from Corynebacterium efficiens (strain DSM 44549 / YS-314 / AJ 12310 / JCM 11189 / NBRC 100395).